The chain runs to 533 residues: Probable DNA ligase (533 aa).

An ATP-binding site is contributed by glutamate 211. Lysine 213 acts as the N6-AMP-lysine intermediate in catalysis. ATP is bound by residues arginine 218, arginine 233, glutamate 262, phenylalanine 302, arginine 374, and lysine 380. The disordered stretch occupies residues 512 to 533 (LAGEAAEKGQAEGGGEELEDDG).

The protein belongs to the ATP-dependent DNA ligase family. Mg(2+) is required as a cofactor.

It catalyses the reaction ATP + (deoxyribonucleotide)n-3'-hydroxyl + 5'-phospho-(deoxyribonucleotide)m = (deoxyribonucleotide)n+m + AMP + diphosphate.. DNA ligase that seals nicks in double-stranded DNA during DNA replication, DNA recombination and DNA repair. This chain is Probable DNA ligase, found in Sorangium cellulosum (strain So ce56) (Polyangium cellulosum (strain So ce56)).